The sequence spans 121 residues: Large ribosomal subunit protein uL18 (121 aa).

It belongs to the universal ribosomal protein uL18 family. As to quaternary structure, part of the 50S ribosomal subunit; part of the 5S rRNA/L5/L18/L25 subcomplex. Contacts the 5S and 23S rRNAs.

In terms of biological role, this is one of the proteins that bind and probably mediate the attachment of the 5S RNA into the large ribosomal subunit, where it forms part of the central protuberance. The polypeptide is Large ribosomal subunit protein uL18 (Bordetella avium (strain 197N)).